Consider the following 322-residue polypeptide: Triosephosphate isomerase, chloroplastic (322 aa).

The N-terminal 67 residues, Met-1–Met-67, are a transit peptide targeting the chloroplast. 2 residues coordinate substrate: Asn-78 and Lys-80. The Electrophile role is filled by His-162. Glu-232 functions as the Proton acceptor in the catalytic mechanism.

Belongs to the triosephosphate isomerase family. As to quaternary structure, homodimer.

It is found in the plastid. It localises to the chloroplast. The catalysed reaction is D-glyceraldehyde 3-phosphate = dihydroxyacetone phosphate. It participates in carbohydrate biosynthesis; Calvin cycle. The polypeptide is Triosephosphate isomerase, chloroplastic (TPIP1) (Spinacia oleracea (Spinach)).